The chain runs to 181 residues: Peptide methionine sulfoxide reductase MsrA (181 aa).

Cys14 is an active-site residue.

The protein belongs to the MsrA Met sulfoxide reductase family.

The enzyme catalyses L-methionyl-[protein] + [thioredoxin]-disulfide + H2O = L-methionyl-(S)-S-oxide-[protein] + [thioredoxin]-dithiol. The catalysed reaction is [thioredoxin]-disulfide + L-methionine + H2O = L-methionine (S)-S-oxide + [thioredoxin]-dithiol. In terms of biological role, has an important function as a repair enzyme for proteins that have been inactivated by oxidation. Catalyzes the reversible oxidation-reduction of methionine sulfoxide in proteins to methionine. The sequence is that of Peptide methionine sulfoxide reductase MsrA from Bacillus licheniformis (strain ATCC 14580 / DSM 13 / JCM 2505 / CCUG 7422 / NBRC 12200 / NCIMB 9375 / NCTC 10341 / NRRL NRS-1264 / Gibson 46).